The primary structure comprises 161 residues: RNA pyrophosphohydrolase (161 aa).

A Nudix hydrolase domain is found at 12–154 (PYRPGVGMMI…KRKLYQAVVK (143 aa)). Residues 46–67 (GGIVPGETPSIAAMREMLEEIG) carry the Nudix box motif.

The protein belongs to the Nudix hydrolase family. RppH subfamily. Requires a divalent metal cation as cofactor.

Accelerates the degradation of transcripts by removing pyrophosphate from the 5'-end of triphosphorylated RNA, leading to a more labile monophosphorylated state that can stimulate subsequent ribonuclease cleavage. The chain is RNA pyrophosphohydrolase from Rickettsia africae (strain ESF-5).